A 226-amino-acid chain; its full sequence is MNENLFASFITPMMFGLPLVTLIVLFPSLLFPTSNRLVNNRLISLQQWMLQLVSKQMMSIHNTKGQTWALMLMSLILFIGSTNLLGLLPHSFTPTTQLSMNLGMAIPLWGGAVITGFRNKTKASLAHFLPQGTPTPLIPMLVIIETISLFIQPVALAVRLTANITAGHLLIHLIGGATLALMSINTTTALITFIILILLTVLEFAVAMIQAYVFTLLVSLYLHDNT.

6 helical membrane-spanning segments follow: residues F6–F26, W68–L88, Q97–F117, I138–V158, I164–I184, and A189–I209.

It belongs to the ATPase A chain family. Component of the ATP synthase complex composed at least of ATP5F1A/subunit alpha, ATP5F1B/subunit beta, ATP5MC1/subunit c (homooctomer), MT-ATP6/subunit a, MT-ATP8/subunit 8, ATP5ME/subunit e, ATP5MF/subunit f, ATP5MG/subunit g, ATP5MK/subunit k, ATP5MJ/subunit j, ATP5F1C/subunit gamma, ATP5F1D/subunit delta, ATP5F1E/subunit epsilon, ATP5PF/subunit F6, ATP5PB/subunit b, ATP5PD/subunit d, ATP5PO/subunit OSCP. ATP synthase complex consists of a soluble F(1) head domain (subunits alpha(3) and beta(3)) - the catalytic core - and a membrane F(0) domain - the membrane proton channel (subunits c, a, 8, e, f, g, k and j). These two domains are linked by a central stalk (subunits gamma, delta, and epsilon) rotating inside the F1 region and a stationary peripheral stalk (subunits F6, b, d, and OSCP). Interacts with DNAJC30; interaction is direct.

The protein localises to the mitochondrion inner membrane. The enzyme catalyses H(+)(in) = H(+)(out). Its function is as follows. Subunit a, of the mitochondrial membrane ATP synthase complex (F(1)F(0) ATP synthase or Complex V) that produces ATP from ADP in the presence of a proton gradient across the membrane which is generated by electron transport complexes of the respiratory chain. ATP synthase complex consist of a soluble F(1) head domain - the catalytic core - and a membrane F(1) domain - the membrane proton channel. These two domains are linked by a central stalk rotating inside the F(1) region and a stationary peripheral stalk. During catalysis, ATP synthesis in the catalytic domain of F(1) is coupled via a rotary mechanism of the central stalk subunits to proton translocation. With the subunit c (ATP5MC1), forms the proton-conducting channel in the F(0) domain, that contains two crucial half-channels (inlet and outlet) that facilitate proton movement from the mitochondrial intermembrane space (IMS) into the matrix. Protons are taken up via the inlet half-channel and released through the outlet half-channel, following a Grotthuss mechanism. The protein is ATP synthase F(0) complex subunit a of Ovis aries (Sheep).